The primary structure comprises 500 residues: Potassium voltage-gated channel subfamily V member 1 (500 aa).

Residues 1-210 (MPSSGRALLD…EKPGSSTAAR (210 aa)) are Cytoplasmic-facing. The segment covering 168–181 (KKDTEDQESQHESE) has biased composition (basic and acidic residues). The segment at 168 to 189 (KKDTEDQESQHESEQDFSQGPC) is disordered. A helical transmembrane segment spans residues 211 to 231 (IFGVISIIFVVVSIINMALMS). Topologically, residues 232–238 (AELSWLD) are extracellular. The chain crosses the membrane as a helical span at residues 239 to 259 (LQLLEILEYVCISWFTGEFVL). At 260–276 (RFLCVRDRCRFLRKVPN) the chain is on the cytoplasmic side. The helical transmembrane segment at 277–297 (IIDLLAILPFYITLLVESLSG) threads the bilayer. At 298 to 309 (SQTTQELENVGR) the chain is on the extracellular side. Residues 310 to 331 (IVQVLRLLRALRMLKLGRHSTG) form a helical; Voltage-sensor membrane-spanning segment. The Cytoplasmic segment spans residues 332–345 (LRSLGMTITQCYEE). Residues 346 to 366 (VGLLLLFLSVGISIFSTVEYF) traverse the membrane as a helical segment. A Selectivity filter motif is present at residues 392–397 (TVGYGD). The helical transmembrane segment at 407-427 (IVAFMCILSGILVLALPIAII) threads the bilayer. The Cytoplasmic segment spans residues 428-500 (NDRFSACYFT…RSSGGDDFWF (73 aa)).

Belongs to the potassium channel family. V (TC 1.A.1.2) subfamily. Kv8.1/KCNV1 sub-subfamily. As to quaternary structure, heteromultimer with KCNB1 and KCNB2. Interacts with KCNC4 and KCND1. In terms of tissue distribution, detected in brain.

Its subcellular location is the cell membrane. In terms of biological role, potassium channel subunit that does not form functional channels by itself. Modulates KCNB1 and KCNB2 channel activity by shifting the threshold for inactivation to more negative values and by slowing the rate of inactivation. Can down-regulate the channel activity of KCNB1, KCNB2, KCNC4 and KCND1, possibly by trapping them in intracellular membranes. This Homo sapiens (Human) protein is Potassium voltage-gated channel subfamily V member 1 (KCNV1).